Consider the following 131-residue polypeptide: Small ribosomal subunit protein uS8 (131 aa).

It belongs to the universal ribosomal protein uS8 family. As to quaternary structure, part of the 30S ribosomal subunit. Contacts proteins S5 and S12.

In terms of biological role, one of the primary rRNA binding proteins, it binds directly to 16S rRNA central domain where it helps coordinate assembly of the platform of the 30S subunit. This is Small ribosomal subunit protein uS8 from Campylobacter jejuni subsp. jejuni serotype O:23/36 (strain 81-176).